A 469-amino-acid chain; its full sequence is Glutamate--tRNA ligase 2 (469 aa).

The 'HIGH' region signature appears at 11 to 21 (PSPTGHLHLGG). A 'KMSKS' region motif is present at residues 238-242 (KLSKR). K241 lines the ATP pocket.

Belongs to the class-I aminoacyl-tRNA synthetase family. Glutamate--tRNA ligase type 1 subfamily. As to quaternary structure, monomer.

The protein resides in the cytoplasm. It catalyses the reaction tRNA(Glu) + L-glutamate + ATP = L-glutamyl-tRNA(Glu) + AMP + diphosphate. Catalyzes the attachment of glutamate to tRNA(Glu) in a two-step reaction: glutamate is first activated by ATP to form Glu-AMP and then transferred to the acceptor end of tRNA(Glu). In Ehrlichia chaffeensis (strain ATCC CRL-10679 / Arkansas), this protein is Glutamate--tRNA ligase 2.